The sequence spans 135 residues: Large ribosomal subunit protein uL16c (135 aa).

This sequence belongs to the universal ribosomal protein uL16 family. Part of the 50S ribosomal subunit.

Its subcellular location is the plastid. It is found in the chloroplast. The chain is Large ribosomal subunit protein uL16c from Coffea arabica (Arabian coffee).